Here is a 429-residue protein sequence, read N- to C-terminus: Methylenetetrahydrofolate--tRNA-(uracil-5-)-methyltransferase TrmFO (429 aa).

FAD is bound at residue 7-12; it reads GAGLAG.

It belongs to the MnmG family. TrmFO subfamily. FAD is required as a cofactor.

The protein localises to the cytoplasm. The enzyme catalyses uridine(54) in tRNA + (6R)-5,10-methylene-5,6,7,8-tetrahydrofolate + NADH + H(+) = 5-methyluridine(54) in tRNA + (6S)-5,6,7,8-tetrahydrofolate + NAD(+). The catalysed reaction is uridine(54) in tRNA + (6R)-5,10-methylene-5,6,7,8-tetrahydrofolate + NADPH + H(+) = 5-methyluridine(54) in tRNA + (6S)-5,6,7,8-tetrahydrofolate + NADP(+). Functionally, catalyzes the folate-dependent formation of 5-methyl-uridine at position 54 (M-5-U54) in all tRNAs. This Thermosipho africanus (strain TCF52B) protein is Methylenetetrahydrofolate--tRNA-(uracil-5-)-methyltransferase TrmFO.